The sequence spans 115 residues: NAD(P)H-quinone oxidoreductase subunit M (115 aa).

This sequence belongs to the complex I NdhM subunit family. As to quaternary structure, NDH-1 can be composed of about 15 different subunits; different subcomplexes with different compositions have been identified which probably have different functions.

It is found in the cellular thylakoid membrane. It catalyses the reaction a plastoquinone + NADH + (n+1) H(+)(in) = a plastoquinol + NAD(+) + n H(+)(out). The catalysed reaction is a plastoquinone + NADPH + (n+1) H(+)(in) = a plastoquinol + NADP(+) + n H(+)(out). In terms of biological role, NDH-1 shuttles electrons from an unknown electron donor, via FMN and iron-sulfur (Fe-S) centers, to quinones in the respiratory and/or the photosynthetic chain. The immediate electron acceptor for the enzyme in this species is believed to be plastoquinone. Couples the redox reaction to proton translocation, and thus conserves the redox energy in a proton gradient. Cyanobacterial NDH-1 also plays a role in inorganic carbon-concentration. This chain is NAD(P)H-quinone oxidoreductase subunit M, found in Prochlorococcus marinus (strain SARG / CCMP1375 / SS120).